We begin with the raw amino-acid sequence, 156 residues long: Arginine repressor (156 aa).

It belongs to the ArgR family.

The protein localises to the cytoplasm. It functions in the pathway amino-acid biosynthesis; L-arginine biosynthesis [regulation]. In terms of biological role, regulates arginine biosynthesis genes. This is Arginine repressor from Aliivibrio fischeri (strain ATCC 700601 / ES114) (Vibrio fischeri).